A 336-amino-acid polypeptide reads, in one-letter code: Dihydroorotate dehydrogenase (quinone) (336 aa).

FMN contacts are provided by residues 62-66 (AGLDK) and T86. K66 provides a ligand contact to substrate. A substrate-binding site is contributed by 111–115 (NRMGF). Positions 139 and 172 each coordinate FMN. N172 is a binding site for substrate. S175 (nucleophile) is an active-site residue. Residue N177 coordinates substrate. The FMN site is built by K217 and T245. Residue 246-247 (NT) participates in substrate binding. FMN contacts are provided by residues G268, G297, and 318 to 319 (YS).

It belongs to the dihydroorotate dehydrogenase family. Type 2 subfamily. As to quaternary structure, monomer. Requires FMN as cofactor.

The protein resides in the cell membrane. It carries out the reaction (S)-dihydroorotate + a quinone = orotate + a quinol. Its pathway is pyrimidine metabolism; UMP biosynthesis via de novo pathway; orotate from (S)-dihydroorotate (quinone route): step 1/1. Functionally, catalyzes the conversion of dihydroorotate to orotate with quinone as electron acceptor. In Escherichia coli (strain UTI89 / UPEC), this protein is Dihydroorotate dehydrogenase (quinone).